Consider the following 224-residue polypeptide: Non-structural protein 3 (224 aa).

In terms of domain architecture, CoV 3a-like viroporin TM spans 34-124; it reads NVVPIRQASN…RYKNALFIIF (91 aa). 3 helical membrane-spanning segments follow: residues 40-60, 69-88, and 95-111; these read QASN…FALF, YIML…LLYY, and ATII…LVCF. In terms of domain architecture, CoV 3a-like viroporin CD spans 128 to 203; it reads TLSFLNGKAA…KLYVFSQHQI (76 aa).

It is found in the host membrane. This chain is Non-structural protein 3, found in Sus scrofa (Pig).